A 145-amino-acid polypeptide reads, in one-letter code: Transcriptional regulator MraZ (145 aa).

2 consecutive SpoVT-AbrB domains span residues 5-49 (TYNH…LESE) and 78-121 (TYKV…AKEV).

Belongs to the MraZ family. As to quaternary structure, forms oligomers.

The protein resides in the cytoplasm. The protein localises to the nucleoid. The protein is Transcriptional regulator MraZ of Ureaplasma urealyticum serovar 10 (strain ATCC 33699 / Western).